The following is a 143-amino-acid chain: Large ribosomal subunit protein bL17 (143 aa).

Residues 124 to 133 (GAGDRARLEA) are compositionally biased toward basic and acidic residues. Positions 124–143 (GAGDRARLEAEGTDAEAAAA) are disordered.

It belongs to the bacterial ribosomal protein bL17 family. In terms of assembly, part of the 50S ribosomal subunit. Contacts protein L32.

The protein is Large ribosomal subunit protein bL17 of Mesorhizobium japonicum (strain LMG 29417 / CECT 9101 / MAFF 303099) (Mesorhizobium loti (strain MAFF 303099)).